Reading from the N-terminus, the 115-residue chain is Peptidyl-tRNA hydrolase (115 aa).

This sequence belongs to the PTH2 family.

It localises to the cytoplasm. It catalyses the reaction an N-acyl-L-alpha-aminoacyl-tRNA + H2O = an N-acyl-L-amino acid + a tRNA + H(+). In terms of biological role, the natural substrate for this enzyme may be peptidyl-tRNAs which drop off the ribosome during protein synthesis. The sequence is that of Peptidyl-tRNA hydrolase from Methanococcoides burtonii (strain DSM 6242 / NBRC 107633 / OCM 468 / ACE-M).